We begin with the raw amino-acid sequence, 876 residues long: AP-1 complex subunit gamma-1 (876 aa).

9 HEAT repeats span residues Asp97 to Ala135, Glu136 to Asp173, Phe248 to Ser284, Ser308 to Gln345, Ala346 to Val382, Gln384 to Pro417, Glu418 to Glu454, Val506 to Ser545, and Ser560 to Asn599. In terms of domain architecture, GAE spans Pro756 to Pro873.

The protein belongs to the adaptor complexes large subunit family. In terms of assembly, adaptor protein complex 1 (AP-1) is a heterotetramer composed of two large adaptins (gamma-type subunit and beta-type subunit), a medium adaptin (mu-type subunit) and a small adaptin (sigma-type subunit). Binds to EPSIN1. Interacts with DRP2A/ADL6 (via C-terminus).

The protein localises to the golgi apparatus. It is found in the cytoplasmic vesicle. Its subcellular location is the clathrin-coated vesicle membrane. In terms of biological role, subunit of clathrin-associated adaptor protein complex 1 that plays a role in protein sorting at the trans-Golgi network and early endosomes (TGN/EE). The AP complexes mediate both the recruitment of clathrin to membranes and the recognition of sorting signals within the cytosolic tails of transmembrane cargo molecules. The polypeptide is AP-1 complex subunit gamma-1 (GAMMA-ADR) (Arabidopsis thaliana (Mouse-ear cress)).